Reading from the N-terminus, the 256-residue chain is Ras-related protein Rab-26 (256 aa).

Residues 1–53 (MSRKKTPKSKAGSAPATSALPAANGPRPVRPGTARPGPEAPPNGPPQPGRSSV) are disordered. The segment covering 38–48 (PEAPPNGPPQP) has biased composition (pro residues). 9 residues coordinate GTP: S72, G73, V74, G75, K76, T77, C78, S95, and T96. Residue T77 coordinates Mg(2+). Short sequence motifs (switch) lie at residues 86 to 101 (GAFLAGTFISTVGIDF) and 119 to 136 (DTAGQERFRSVTHAYYRD). 2 residues coordinate Mg(2+): T96 and D119. Residues G122, N177, K178, D180, A208, and K209 each coordinate GTP. 2 S-geranylgeranyl cysteine lipidation sites follow: C253 and C254.

The protein belongs to the small GTPase superfamily. Rab family. The cofactor is Mg(2+).

Its subcellular location is the cell membrane. The catalysed reaction is GTP + H2O = GDP + phosphate + H(+). Its activity is regulated as follows. Regulated by guanine nucleotide exchange factors (GEFs) which promote the exchange of bound GDP for free GTP. Regulated by GTPase activating proteins (GAPs) which increase the GTP hydrolysis activity. Inhibited by GDP dissociation inhibitors (GDIs). Functionally, the small GTPases Rab are key regulators of intracellular membrane trafficking, from the formation of transport vesicles to their fusion with membranes. Rabs cycle between an inactive GDP-bound form and an active GTP-bound form that is able to recruit to membranes different set of downstream effectors directly responsible for vesicle formation, movement, tethering and fusion. RAB26 mediates transport of ADRA2A and ADRA2B from the Golgi to the cell membrane. Plays a role in the maturation of zymogenic granules and in pepsinogen secretion in the stomach. Plays a role in the secretion of amylase from acinar granules in the parotid gland. This chain is Ras-related protein Rab-26 (RAB26), found in Bos taurus (Bovine).